The chain runs to 159 residues: Eukaryotic translation initiation factor 5A-5 (159 aa).

Positions 1-12 (MSDEEHHFESKA) are enriched in basic and acidic residues. Residues 1–23 (MSDEEHHFESKADAGASKTYPQQ) are disordered. Residue Lys-52 is modified to Hypusine.

The protein belongs to the eIF-5A family. In terms of processing, lys-52 undergoes hypusination, a unique post-translational modification that consists in the addition of a butylamino group from spermidine to lysine side chain, leading to the formation of the unusual amino acid hypusine. eIF-5As are the only known proteins to undergo this modification, which is essential for their function.

In terms of biological role, translation factor that promotes translation elongation and termination, particularly upon ribosome stalling at specific amino acid sequence contexts. Binds between the exit (E) and peptidyl (P) site of the ribosome and promotes rescue of stalled ribosome: specifically required for efficient translation of polyproline-containing peptides as well as other motifs that stall the ribosome. Acts as a ribosome quality control (RQC) cofactor by joining the RQC complex to facilitate peptidyl transfer during CAT tailing step. The protein is Eukaryotic translation initiation factor 5A-5 (EIF5A5) of Solanum tuberosum (Potato).